The following is a 713-amino-acid chain: Cyclomaltodextrin glucanotransferase (713 aa).

The signal sequence occupies residues 1 to 27; sequence MKKISKLTTALALSLSLALSLLGPAHA. Positions 28-165 are A1; that stretch reads APDTSVSNKQ…NIKVIIDFAP (138 aa). Residues aspartate 54, asparagine 56, asparagine 59, and asparagine 60 each contribute to the Ca(2+) site. A disulfide bridge connects residues cysteine 70 and cysteine 77. Glycine 78 and aspartate 80 together coordinate Ca(2+). 127–128 is a substrate binding site; the sequence is YW. Asparagine 166 contacts Ca(2+). The b stretch occupies residues 166–229; it reads NHTSPASLDQ…NLYDLADLNH (64 aa). Position 167 (histidine 167) interacts with substrate. Isoleucine 217 provides a ligand contact to Ca(2+). Position 220–223 (220–223) interacts with substrate; the sequence is NLYD. Aspartate 226 contacts Ca(2+). The A2 stretch occupies residues 230–433; the sequence is NNSTVDTYLK…LRKSNPAIAY (204 aa). Arginine 254 lines the substrate pocket. Aspartate 256 serves as the catalytic Nucleophile. 259-260 is a binding site for substrate; that stretch reads KH. Histidine 260 is a Ca(2+) binding site. Glutamate 284 acts as the Proton donor in catalysis. Substrate-binding residues include histidine 354, aspartate 398, and arginine 402. The segment at 434–522 is c; that stretch reads GTTQERWINN…GTAVWQYTTA (89 aa). Residues 523–609 are d; it reads VTAPTIGHVG…SNVHDNFEVL (87 aa). One can recognise an IPT/TIG domain in the interval 526-607; the sequence is PTIGHVGPMM…TSSNVHDNFE (82 aa). One can recognise a CBM20 domain in the interval 608 to 713; it reads VLSGDQVSVR…TATINVNWQP (106 aa). The segment at 610 to 713 is e; that stretch reads SGDQVSVRFV…TATINVNWQP (104 aa).

The protein belongs to the glycosyl hydrolase 13 family. Monomer. Ca(2+) is required as a cofactor.

The protein localises to the secreted. The enzyme catalyses Cyclizes part of a (1-&gt;4)-alpha-D-glucan chain by formation of a (1-&gt;4)-alpha-D-glucosidic bond.. This Bacillus sp. (strain 17-1) protein is Cyclomaltodextrin glucanotransferase (cgt).